The following is a 245-amino-acid chain: SDSLSFSFINFDQDERNVIAQGDARLSGNNILQLTRTDSDGTPVRSTVGRILYSAQVRLWEKSTNRVANFQTQFSFFLESPLSNPADGIAFFIAPPDTAIPSGSAGGLLGLFSPKTAQNESANQVLAVEFDTFYAQNSNTWDPNYPHIGIDVNSIKSAKTVRWERREGVTLNVLVTYNPSTKTLDVVATYPDGQRYDLSVVVDVTTVLPEWVRVGFSAASGEQFQTHNLESWSFTSTLLYTAQKE.

A carbohydrate-binding residues include Asp-87 and Gly-107. The N-linked (GlcNAc...) asparagine glycan is linked to Asn-119. The Mn(2+) site is built by Glu-129 and Asp-131. Residues Asp-131 and Phe-133 each coordinate Ca(2+). A carbohydrate contacts are provided by Ser-138 and Asn-139. Ca(2+) contacts are provided by Asn-139 and Asp-142. Mn(2+)-binding residues include Asp-142 and His-147. Residues Gly-221, Glu-222, and Gln-223 each contribute to the a carbohydrate site.

It belongs to the leguminous lectin family. Homodimer.

Its function is as follows. Mannose/glucose-specific lectin that also binds derivatives N-acetyl-D-glucosamine and alpha-methyl-D-mannopyranoside with even higher affinity. Has hemagglutinating activity towards rabbit erythrocytes. Is toxic towards brine shrimp A.nauplii. In rats, induces dose-dependent paw edema. This Centrolobium tomentosum (Arariba) protein is Mannose/glucose-specific lectin.